The sequence spans 867 residues: GRB2-associated and regulator of MAPK protein 1 (867 aa).

A CABIT region spans residues 12–322 (NNITWSTTTL…GLLQGESWFE (311 aa)). At Y464 the chain carries Phosphotyrosine. 3 disordered regions span residues 511-530 (SADV…AVKE), 536-594 (DAPP…QIES), and 735-758 (PPRT…TADA). Polar residues-rich tracts occupy residues 544–554 (SSKQAGSSSAT) and 569–581 (SPSP…SSGL). Positions 740–749 (KCTDAKKDAE) are enriched in basic and acidic residues. An SAM domain is found at 802-867 (ISIEEISKSL…QFINGWRPKM (66 aa)).

Belongs to the GAREM family.

Functionally, adapter protein that may provide a link between cell surface epidermal growth factor receptor and the MAPK/ERK signaling pathway. May promote cell proliferation. The sequence is that of GRB2-associated and regulator of MAPK protein 1 (garem1) from Danio rerio (Zebrafish).